The chain runs to 401 residues: Insertion element ISM1 uncharacterized 48.3 kDa protein (401 aa).

In terms of biological role, this polypeptide is involved in transposition, and should therefore bind to nucleic acids. The protein is Insertion element ISM1 uncharacterized 48.3 kDa protein of Methanobrevibacter smithii.